The primary structure comprises 242 residues: Anti-Pycsar protein Apyc1 (242 aa).

A beta-lactamase-like region spans residues 17 to 216 (FNNNALIEQD…EMQSIIKLMH (200 aa)). Zn(2+) contacts are provided by histidine 59, histidine 61, aspartate 63, histidine 64, histidine 142, aspartate 162, and histidine 216.

This sequence belongs to the anti-Pycsar protein Apyc1 family. In terms of assembly, homodimer. Zn(2+) is required as a cofactor.

The catalysed reaction is 3',5'-cyclic CMP + H2O = CMP + H(+). It catalyses the reaction 3',5'-cyclic UMP + H2O = UMP + H(+). In terms of biological role, counteracts the endogenous Pycsar antiviral defense system. Phosphodiesterase that enables metal-dependent hydrolysis of host cyclic nucleotide Pycsar defense signals such as cCMP and cUMP. This Saccharibacillus brassicae protein is Anti-Pycsar protein Apyc1.